An 87-amino-acid polypeptide reads, in one-letter code: MKEGIHPDYREVLFIDMSNDFKFVTRSTIQTRETAEFNGKTYPLAKIEVSSESHPFYTGQQKIMDTAGRVEKFNKKFGARASGKAAK.

Belongs to the bacterial ribosomal protein bL31 family. Type B subfamily. As to quaternary structure, part of the 50S ribosomal subunit.

The polypeptide is Large ribosomal subunit protein bL31B (Paraburkholderia phymatum (strain DSM 17167 / CIP 108236 / LMG 21445 / STM815) (Burkholderia phymatum)).